The following is a 527-amino-acid chain: Inorganic phosphate transporter 1-1 (527 aa).

Residues 1 to 21 (MAGGQLNVLSTLDQAKTQWYH) lie on the Cytoplasmic side of the membrane. A helical transmembrane segment spans residues 22–42 (FMAIVIAGMGFFTDAYDLFCI). Residues 43 to 70 (SLVTKLLGRIYYTDDSKDTPGALPPNVS) lie on the Extracellular side of the membrane. The chain crosses the membrane as a helical span at residues 71 to 91 (AAVTGVALCGTLAGQLFFGWL). Over 92-99 (GDKLGRKS) the chain is Cytoplasmic. Residues 100 to 120 (VYGFTLILMVVCSVASGLSFG) form a helical membrane-spanning segment. The Extracellular segment spans residues 121–124 (SSAK). Residues 125–145 (GVVSTLCFFRFWLGFGIGGDY) traverse the membrane as a helical segment. The Cytoplasmic portion of the chain corresponds to 146–163 (PLSATIMSEYANKRTRGA). A helical transmembrane segment spans residues 164–184 (FIAAVFAMQGFGILFGAIVAL). The Extracellular portion of the chain corresponds to 185–211 (AVSAGFRHAYPAPSYSDNHAASLVPQA). A helical membrane pass occupies residues 212–232 (DYVWRIILMFGTVPAALTYYW). Topologically, residues 233–292 (RMKMPETARYTALIARNAKQAAADMSKVLHTQIEESADRAETVAVGGESWGLFSRQFLRR) are cytoplasmic. Residues 293-313 (HGLHLLATTSTWFLLDIAFYS) form a helical membrane-spanning segment. The Extracellular segment spans residues 314-348 (QNLFQKDIFSKVGWIPPAKTMNALEELYRIARAQA). Residues 349-369 (LIALCGTIPGYWFTVAFIEIM) form a helical membrane-spanning segment. Over 370 to 371 (GR) the chain is Cytoplasmic. The chain crosses the membrane as a helical span at residues 372–392 (FWIQIMGFAMMTAFMLGLAIP). The Extracellular segment spans residues 393 to 405 (YHHWTTPGHHTGF). The helical transmembrane segment at 406–426 (IVMYGFTFFFANFGPNSTTFI) threads the bilayer. The Cytoplasmic portion of the chain corresponds to 427–442 (VPAEIYPARLRSTCHG). Residues 443–463 (ISAAAGKAGAIIGAFGFLYAA) form a helical membrane-spanning segment. Residues 464-481 (QDQHKPEPGYPRGIGIKN) are Extracellular-facing. A helical transmembrane segment spans residues 482-502 (ALFVLAGTNFLGTIMTLLVPE). The Cytoplasmic portion of the chain corresponds to 503-527 (SKGMSLEVISQEVADGDDEEAAYPK).

The protein belongs to the major facilitator superfamily. Phosphate:H(+) symporter (TC 2.A.1.9) family. As to expression, expressed in roots, stems and leaves.

It localises to the membrane. Its function is as follows. High-affinity transporter for external inorganic phosphate. Required for phosphate acquisition in plant. This is Inorganic phosphate transporter 1-1 (PHT1-1) from Oryza sativa subsp. japonica (Rice).